The following is a 32-amino-acid chain: MSATDFDSLYQLIFNAGLVICFGLGVISGGQR.

Residues 9 to 29 (LYQLIFNAGLVICFGLGVISG) form a helical membrane-spanning segment.

Belongs to the inovirus G7P protein family.

Its subcellular location is the virion. It is found in the host membrane. Its function is as follows. May initiate with G9P the virion concomitant assembly-budding process, by interacting with the packaging signal of the viral genome. The assembly-budding takes place at the host inner membrane. In turn, G7P and G9P are present at the end of the filamentous virion that emerges first from the bacterial host. This chain is Tail virion protein G7P (VII), found in Escherichia phage If1 (Bacteriophage If1).